Consider the following 119-residue polypeptide: Ribosome-binding factor A (119 aa).

Belongs to the RbfA family. Monomer. Binds 30S ribosomal subunits, but not 50S ribosomal subunits or 70S ribosomes.

It localises to the cytoplasm. One of several proteins that assist in the late maturation steps of the functional core of the 30S ribosomal subunit. Associates with free 30S ribosomal subunits (but not with 30S subunits that are part of 70S ribosomes or polysomes). Required for efficient processing of 16S rRNA. May interact with the 5'-terminal helix region of 16S rRNA. The polypeptide is Ribosome-binding factor A (Chlorobium luteolum (strain DSM 273 / BCRC 81028 / 2530) (Pelodictyon luteolum)).